Here is a 383-residue protein sequence, read N- to C-terminus: UDP-N-acetylglucosamine--N-acetylmuramyl-(pentapeptide) pyrophosphoryl-undecaprenol N-acetylglucosamine transferase (383 aa).

Residues 10–12, N124, R165, S190, I245, and Q290 contribute to the UDP-N-acetyl-alpha-D-glucosamine site; that span reads TGG. The segment at 364–383 is disordered; it reads PFGQAREPGQKPARPPDLAS.

It belongs to the glycosyltransferase 28 family. MurG subfamily.

It is found in the cell inner membrane. The catalysed reaction is di-trans,octa-cis-undecaprenyl diphospho-N-acetyl-alpha-D-muramoyl-L-alanyl-D-glutamyl-meso-2,6-diaminopimeloyl-D-alanyl-D-alanine + UDP-N-acetyl-alpha-D-glucosamine = di-trans,octa-cis-undecaprenyl diphospho-[N-acetyl-alpha-D-glucosaminyl-(1-&gt;4)]-N-acetyl-alpha-D-muramoyl-L-alanyl-D-glutamyl-meso-2,6-diaminopimeloyl-D-alanyl-D-alanine + UDP + H(+). The protein operates within cell wall biogenesis; peptidoglycan biosynthesis. Cell wall formation. Catalyzes the transfer of a GlcNAc subunit on undecaprenyl-pyrophosphoryl-MurNAc-pentapeptide (lipid intermediate I) to form undecaprenyl-pyrophosphoryl-MurNAc-(pentapeptide)GlcNAc (lipid intermediate II). The chain is UDP-N-acetylglucosamine--N-acetylmuramyl-(pentapeptide) pyrophosphoryl-undecaprenol N-acetylglucosamine transferase from Anaeromyxobacter dehalogenans (strain 2CP-C).